Reading from the N-terminus, the 468-residue chain is Transmembrane protein 151A (468 aa).

Residues 1–20 (MPEGEGGDCGEVPALVPDGE) are disordered. Helical transmembrane passes span 45–65 (CLLL…CRLA) and 98–118 (YLYI…AECW). Residues 384 to 438 (VSSNSLPPARPSGPRLPFSRSRLSLGAGGRTTPGVFRSLSGGPLGRRGEDTEPLE) form a disordered region.

The protein belongs to the TMEM151 family. As to expression, highly expressed in the central nervous system (CNS) including the cerebral cortex, hippocampus, spinal cord, brainstem, and thalamus. Expression is relatively low during postnatal stages but highly expressed at postnatal day 14 (P14), and declined in adulthood. Also expressed in the stomach, heart, liver, spleen, lung, kidney, and muscle.

It is found in the endoplasmic reticulum membrane. Its subcellular location is the cell projection. The protein resides in the axon. It localises to the dendrite. The polypeptide is Transmembrane protein 151A (Tmem151a) (Mus musculus (Mouse)).